The sequence spans 320 residues: SPX domain-containing protein 4 (320 aa).

The SPX domain maps to 1–170; sequence MKFGKDFRSH…GGLLSLPFTQ (170 aa). 2 disordered regions span residues 209–233 and 275–320; these read SSSAKLQPQNDDAASHDPASSVDVE and CSGA…PRDE. Polar residues predominate over residues 278–289; that stretch reads AITSESDSYSDS. Residues 290–299 show a composition bias toward acidic residues; it reads QIEDAEDDDK. Positions 304–313 are enriched in polar residues; that stretch reads REQNTAQNAA.

Homodimer. Interacts (via N-terminus) with PHR2 (via C-terminus) in the presence of inositol polyphosphate. Interacts with BHLH6. In terms of processing, degraded under Pi starvation conditions through the ubiquitin/26S proteasome pathway. As to expression, widely expressed. Detected in root cells, with the exception of epidermis, and in mesophyll and vascular bundles in leaves.

It is found in the membrane. The protein localises to the nucleus. The protein resides in the cytoplasm. Functionally, inositol polyphosphate sensor that associates with transcription factors to regulate Pi starvation responses. The SPX domain provides a basic binding surface for inositol polyphosphate signaling molecules. Interacts with PHR2 to inhibit its translocation to the nucleus and repress its DNA-binding activity, and then negatively regulate Pi signaling. This is SPX domain-containing protein 4 from Oryza sativa subsp. japonica (Rice).